An 859-amino-acid chain; its full sequence is DNA mismatch repair protein MutS (859 aa).

ATP is bound at residue 618–625 (GPNMGGKS). A disordered region spans residues 803–829 (RDHDVQQNTEQQGTQQNMSFVPSAPSP). The span at 808 to 819 (QQNTEQQGTQQN) shows a compositional bias: low complexity.

Belongs to the DNA mismatch repair MutS family.

Functionally, this protein is involved in the repair of mismatches in DNA. It is possible that it carries out the mismatch recognition step. This protein has a weak ATPase activity. This Shewanella pealeana (strain ATCC 700345 / ANG-SQ1) protein is DNA mismatch repair protein MutS.